The sequence spans 62 residues: Photosystem II reaction center protein Z (62 aa).

The next 2 membrane-spanning stretches (helical) occupy residues 8 to 28 and 41 to 61; these read AVFA…VVLA and FSGA…NSFV.

This sequence belongs to the PsbZ family. As to quaternary structure, PSII is composed of 1 copy each of membrane proteins PsbA, PsbB, PsbC, PsbD, PsbE, PsbF, PsbH, PsbI, PsbJ, PsbK, PsbL, PsbM, PsbT, PsbY, PsbZ, Psb30/Ycf12, at least 3 peripheral proteins of the oxygen-evolving complex and a large number of cofactors. It forms dimeric complexes.

It is found in the plastid. It localises to the chloroplast thylakoid membrane. Functionally, may control the interaction of photosystem II (PSII) cores with the light-harvesting antenna, regulates electron flow through the 2 photosystem reaction centers. PSII is a light-driven water plastoquinone oxidoreductase, using light energy to abstract electrons from H(2)O, generating a proton gradient subsequently used for ATP formation. In Zygnema circumcarinatum (Green alga), this protein is Photosystem II reaction center protein Z.